Consider the following 167-residue polypeptide: Ribonuclease P protein subunit p20 (167 aa).

Residues 1-36 (MMGSNYPEHGTKPRSAKYHKQQNHRVVRKQPPRPAV) are disordered. A compositionally biased stretch (basic residues) spans 12–31 (KPRSAKYHKQQNHRVVRKQP).

Interacts with Smn.

The protein resides in the nucleus. The protein localises to the nucleolus. It localises to the cytoplasm. It is found in the cytoplasmic granule. Component of ribonuclease P, a protein complex that generates mature tRNA molecules by cleaving their 5'-ends. Also a component of RNase MRP complex, which cleaves pre-rRNA sequences. The sequence is that of Ribonuclease P protein subunit p20 from Drosophila melanogaster (Fruit fly).